The sequence spans 363 residues: Src kinase-associated phosphoprotein 1 (363 aa).

The segment at 62-94 (PFPSDYKEEDGSDDNRSSSLGRSAQSDDASLAS) is disordered. The segment covering 84–94 (SAQSDDASLAS) has biased composition (low complexity). One can recognise a PH domain in the interval 118–221 (NVLKQGYLEK…WVDQIKIVLR (104 aa)). Residues 227 to 273 (VIPVDDEEEEEEEEETYDDIEGEGGPPLPQPLSGTWGRGGDTGAADE) form a disordered region. Positions 230–248 (VDDEEEEEEEEETYDDIEG) are enriched in acidic residues. Residues 301-362 (EYANYYQGLW…PKDFLHPAYI (62 aa)) form the SH3 domain.

This sequence belongs to the SKAP family. Homodimer. Phosphorylated on tyrosines.

The protein resides in the cytoplasm. It is found in the nucleus. The protein localises to the cell membrane. In terms of biological role, positively regulates T-cell receptor signaling. Required for optimal conjugation between T-cells and antigen-presenting cells. This chain is Src kinase-associated phosphoprotein 1 (skap1), found in Takifugu rubripes (Japanese pufferfish).